The following is a 169-amino-acid chain: Chorismate pyruvate-lyase (169 aa).

Substrate is bound by residues methionine 37, arginine 79, leucine 117, and glutamate 158.

Belongs to the UbiC family. As to quaternary structure, monomer.

It is found in the cytoplasm. The enzyme catalyses chorismate = 4-hydroxybenzoate + pyruvate. It functions in the pathway cofactor biosynthesis; ubiquinone biosynthesis. Functionally, removes the pyruvyl group from chorismate, with concomitant aromatization of the ring, to provide 4-hydroxybenzoate (4HB) for the ubiquinone pathway. The chain is Chorismate pyruvate-lyase from Proteus mirabilis (strain HI4320).